The following is a 98-amino-acid chain: Large ribosomal subunit protein eL21 (98 aa).

Belongs to the eukaryotic ribosomal protein eL21 family.

The chain is Large ribosomal subunit protein eL21 from Methanocorpusculum labreanum (strain ATCC 43576 / DSM 4855 / Z).